Here is a 98-residue protein sequence, read N- to C-terminus: NADH-ubiquinone oxidoreductase chain 4L (98 aa).

3 consecutive transmembrane segments (helical) span residues 1 to 21, 29 to 49, and 61 to 81; these read MSLT…GLLM, SLLC…MTIL, and IILL…LVMV.

The protein belongs to the complex I subunit 4L family. Core subunit of respiratory chain NADH dehydrogenase (Complex I) which is composed of 45 different subunits.

Its subcellular location is the mitochondrion inner membrane. The enzyme catalyses a ubiquinone + NADH + 5 H(+)(in) = a ubiquinol + NAD(+) + 4 H(+)(out). Core subunit of the mitochondrial membrane respiratory chain NADH dehydrogenase (Complex I) which catalyzes electron transfer from NADH through the respiratory chain, using ubiquinone as an electron acceptor. Part of the enzyme membrane arm which is embedded in the lipid bilayer and involved in proton translocation. The protein is NADH-ubiquinone oxidoreductase chain 4L (MT-ND4L) of Vampyressa brocki (Brock's yellow-eared bat).